The following is a 393-amino-acid chain: 4-hydroxyphenylpyruvate dioxygenase (393 aa).

Threonine 2 carries the N-acetylthreonine modification. 2 consecutive VOC domains span residues 18–149 (HFHS…LVEK) and 180–338 (IIDH…IFTK). N6-succinyllysine is present on lysine 132. Histidine 183 lines the Fe cation pocket. Phosphoserine occurs at positions 211, 226, and 250. Residues histidine 266 and glutamate 349 each coordinate Fe cation.

This sequence belongs to the 4HPPD family. In terms of assembly, homodimer. It depends on Fe cation as a cofactor.

Its subcellular location is the cytoplasm. It is found in the endoplasmic reticulum membrane. The protein localises to the golgi apparatus membrane. It catalyses the reaction 3-(4-hydroxyphenyl)pyruvate + O2 = homogentisate + CO2. Its pathway is amino-acid degradation; L-phenylalanine degradation; acetoacetate and fumarate from L-phenylalanine: step 3/6. Functionally, catalyzes the conversion of 4-hydroxyphenylpyruvic acid to homogentisic acid, one of the steps in tyrosine catabolism. This Mus musculus (Mouse) protein is 4-hydroxyphenylpyruvate dioxygenase (Hpd).